We begin with the raw amino-acid sequence, 136 residues long: Nucleoside diphosphate kinase (136 aa).

Residues Lys10, Phe58, Arg86, Thr92, Arg104, and Asn114 each coordinate ATP. His117 serves as the catalytic Pros-phosphohistidine intermediate.

This sequence belongs to the NDK family. Homotetramer. The cofactor is Mg(2+).

It localises to the cytoplasm. The catalysed reaction is a 2'-deoxyribonucleoside 5'-diphosphate + ATP = a 2'-deoxyribonucleoside 5'-triphosphate + ADP. The enzyme catalyses a ribonucleoside 5'-diphosphate + ATP = a ribonucleoside 5'-triphosphate + ADP. Functionally, major role in the synthesis of nucleoside triphosphates other than ATP. The ATP gamma phosphate is transferred to the NDP beta phosphate via a ping-pong mechanism, using a phosphorylated active-site intermediate. The chain is Nucleoside diphosphate kinase from Mycolicibacterium vanbaalenii (strain DSM 7251 / JCM 13017 / BCRC 16820 / KCTC 9966 / NRRL B-24157 / PYR-1) (Mycobacterium vanbaalenii).